The sequence spans 417 residues: Serine hydroxymethyltransferase (417 aa).

(6S)-5,6,7,8-tetrahydrofolate contacts are provided by residues leucine 121 and 125 to 127 (GHL). N6-(pyridoxal phosphate)lysine is present on lysine 229. 355–357 (SPF) lines the (6S)-5,6,7,8-tetrahydrofolate pocket.

This sequence belongs to the SHMT family. In terms of assembly, homodimer. The cofactor is pyridoxal 5'-phosphate.

It localises to the cytoplasm. It catalyses the reaction (6R)-5,10-methylene-5,6,7,8-tetrahydrofolate + glycine + H2O = (6S)-5,6,7,8-tetrahydrofolate + L-serine. The protein operates within one-carbon metabolism; tetrahydrofolate interconversion. Its pathway is amino-acid biosynthesis; glycine biosynthesis; glycine from L-serine: step 1/1. Its function is as follows. Catalyzes the reversible interconversion of serine and glycine with tetrahydrofolate (THF) serving as the one-carbon carrier. This reaction serves as the major source of one-carbon groups required for the biosynthesis of purines, thymidylate, methionine, and other important biomolecules. Also exhibits THF-independent aldolase activity toward beta-hydroxyamino acids, producing glycine and aldehydes, via a retro-aldol mechanism. In Enterobacter sp. (strain 638), this protein is Serine hydroxymethyltransferase.